A 288-amino-acid chain; its full sequence is ATP synthase gamma chain (288 aa).

This sequence belongs to the ATPase gamma chain family. As to quaternary structure, F-type ATPases have 2 components, CF(1) - the catalytic core - and CF(0) - the membrane proton channel. CF(1) has five subunits: alpha(3), beta(3), gamma(1), delta(1), epsilon(1). CF(0) has three main subunits: a, b and c.

It localises to the cell inner membrane. Its function is as follows. Produces ATP from ADP in the presence of a proton gradient across the membrane. The gamma chain is believed to be important in regulating ATPase activity and the flow of protons through the CF(0) complex. The protein is ATP synthase gamma chain of Aliivibrio fischeri (strain ATCC 700601 / ES114) (Vibrio fischeri).